The following is a 210-amino-acid chain: Shikimate kinase (210 aa).

34 to 39 (GVGKSV) provides a ligand contact to ATP. Ser-38 provides a ligand contact to Mg(2+). Residues Asp-56, Arg-80, and Gly-102 each coordinate substrate. ATP is bound at residue Arg-140. Arg-159 is a binding site for substrate.

This sequence belongs to the shikimate kinase family. In terms of assembly, monomer. Mg(2+) serves as cofactor.

It is found in the cytoplasm. It carries out the reaction shikimate + ATP = 3-phosphoshikimate + ADP + H(+). It functions in the pathway metabolic intermediate biosynthesis; chorismate biosynthesis; chorismate from D-erythrose 4-phosphate and phosphoenolpyruvate: step 5/7. Functionally, catalyzes the specific phosphorylation of the 3-hydroxyl group of shikimic acid using ATP as a cosubstrate. This is Shikimate kinase from Bartonella henselae (strain ATCC 49882 / DSM 28221 / CCUG 30454 / Houston 1) (Rochalimaea henselae).